A 78-amino-acid chain; its full sequence is Acyl carrier protein (78 aa).

A Carrier domain is found at Ser-2–Leu-77. An O-(pantetheine 4'-phosphoryl)serine modification is found at Ser-37.

Belongs to the acyl carrier protein (ACP) family. Post-translationally, 4'-phosphopantetheine is transferred from CoA to a specific serine of apo-ACP by AcpS. This modification is essential for activity because fatty acids are bound in thioester linkage to the sulfhydryl of the prosthetic group.

The protein localises to the cytoplasm. Its pathway is lipid metabolism; fatty acid biosynthesis. Functionally, carrier of the growing fatty acid chain in fatty acid biosynthesis. This Acinetobacter baylyi (strain ATCC 33305 / BD413 / ADP1) protein is Acyl carrier protein.